Reading from the N-terminus, the 326-residue chain is Beta-ketoacyl-[acyl-carrier-protein] synthase III (326 aa).

Residues Cys-111 and His-253 contribute to the active site. The tract at residues 254 to 258 is ACP-binding; that stretch reads QANSR. The active site involves Asn-283.

The protein belongs to the thiolase-like superfamily. FabH family. Homodimer.

The protein localises to the cytoplasm. It catalyses the reaction malonyl-[ACP] + acetyl-CoA + H(+) = 3-oxobutanoyl-[ACP] + CO2 + CoA. The protein operates within lipid metabolism; fatty acid biosynthesis. Catalyzes the condensation reaction of fatty acid synthesis by the addition to an acyl acceptor of two carbons from malonyl-ACP. Catalyzes the first condensation reaction which initiates fatty acid synthesis and may therefore play a role in governing the total rate of fatty acid production. Possesses both acetoacetyl-ACP synthase and acetyl transacylase activities. Its substrate specificity determines the biosynthesis of branched-chain and/or straight-chain of fatty acids. The sequence is that of Beta-ketoacyl-[acyl-carrier-protein] synthase III from Latilactobacillus sakei subsp. sakei (strain 23K) (Lactobacillus sakei subsp. sakei).